The sequence spans 594 residues: MESNHKSGDGLSGTQKEAALRALVQRTGYSLVQENGQRKYGGPPPGWDAAPPERGCEIFIGKLPRDLFEDELIPLCEKIGKIYEMRMMMDFNGNNRGYAFVTFSNKVEAKNAIKQLNNYEIRNGRLLGVCASVDNCRLFVGGIPKTKKREEILSEMKKVTEGVVDVIVYPSAADKTKNRGFAFVEYESHRAAAMARRKLLPGRIQLWGHGIAVDWAEPEVEVDEDTMSSVKILYVRNLMLSTSEEMIEKEFNNIKPGAVERVKKIRDYAFVHFSNREDAVEAMKALNGKVLDGSPIEVTLAKPVDKDSYVRYTRGTGGRGTMLQGEYTYSLGQVYDPTTTYLGAPVFYAPQTYAAIPSLHFPATKGHLSNRAIIRAPSVREIYMNVPVGAAGVRGLGGRGYLAYTGLGRGYQVKGDKREDKLYDILPGMELTPMNPVTLKPQGIKLAPQILEEICQKNNWGQPVYQLHSAIGQDQRQLFLYKITIPALASQNPAIHPFTPPKLSAFVDEAKTYAAEYTLQTLGIPTDGGDGTMATAAAAATAFPGYAVPNATAPVSAAQLKQAVTLGQDLAAYTTYEVYPTFAVTARGDGYGTF.

RRM domains follow at residues 56–134, 136–218, and 231–303; these read CEIF…ASVD, CRLF…WAEP, and KILY…LAKP. Positions 360-409 are required for nuclear localization; sequence HFPATKGHLSNRAIIRAPSVREIYMNVPVGAAGVRGLGGRGYLAYTGLGR. At threonine 499 the chain carries Phosphothreonine.

In terms of assembly, part of the apolipoprotein B mRNA editing complex with APOBEC1. Interacts with TNPO2; TNPO2 may be responsible for transport of A1CF into the nucleus. Interacts with SYNCRIP. Interacts with CELF2/CUGBP2. Interacts with RBM47. As to expression, widely expressed with highest levels in brain, liver, pancreas, colon and spleen.

The protein resides in the nucleus. The protein localises to the endoplasmic reticulum. Its subcellular location is the cytoplasm. Functionally, essential component of the apolipoprotein B mRNA editing enzyme complex which is responsible for the postranscriptional editing of a CAA codon for Gln to a UAA codon for stop in APOB mRNA. Binds to APOB mRNA and is probably responsible for docking the catalytic subunit, APOBEC1, to the mRNA to allow it to deaminate its target cytosine. The complex also protects the edited APOB mRNA from nonsense-mediated decay. This Homo sapiens (Human) protein is APOBEC1 complementation factor (A1CF).